The sequence spans 509 residues: ATP synthase subunit alpha, mitochondrial (509 aa).

171–178 provides a ligand contact to ATP; that stretch reads GDRQTGKT.

The protein belongs to the ATPase alpha/beta chains family. As to quaternary structure, F-type ATPases have 2 components, CF(1) - the catalytic core - and CF(0) - the membrane proton channel. CF(1) has five subunits: alpha(3), beta(3), gamma(1), delta(1), epsilon(1). CF(0) has three main subunits: a, b and c.

It is found in the mitochondrion. Its subcellular location is the mitochondrion inner membrane. In terms of biological role, mitochondrial membrane ATP synthase (F(1)F(0) ATP synthase or Complex V) produces ATP from ADP in the presence of a proton gradient across the membrane which is generated by electron transport complexes of the respiratory chain. F-type ATPases consist of two structural domains, F(1) - containing the extramembraneous catalytic core, and F(0) - containing the membrane proton channel, linked together by a central stalk and a peripheral stalk. During catalysis, ATP synthesis in the catalytic domain of F(1) is coupled via a rotary mechanism of the central stalk subunits to proton translocation. Subunits alpha and beta form the catalytic core in F(1). Rotation of the central stalk against the surrounding alpha(3)beta(3) subunits leads to hydrolysis of ATP in three separate catalytic sites on the beta subunits. Subunit alpha does not bear the catalytic high-affinity ATP-binding sites. The protein is ATP synthase subunit alpha, mitochondrial (ATPA) of Triticum aestivum (Wheat).